The chain runs to 155 residues: SsrA-binding protein (155 aa).

Residues 136 to 155 (RESLKRRQDQRDMQRAMKNY) form a disordered region.

This sequence belongs to the SmpB family.

Its subcellular location is the cytoplasm. Required for rescue of stalled ribosomes mediated by trans-translation. Binds to transfer-messenger RNA (tmRNA), required for stable association of tmRNA with ribosomes. tmRNA and SmpB together mimic tRNA shape, replacing the anticodon stem-loop with SmpB. tmRNA is encoded by the ssrA gene; the 2 termini fold to resemble tRNA(Ala) and it encodes a 'tag peptide', a short internal open reading frame. During trans-translation Ala-aminoacylated tmRNA acts like a tRNA, entering the A-site of stalled ribosomes, displacing the stalled mRNA. The ribosome then switches to translate the ORF on the tmRNA; the nascent peptide is terminated with the 'tag peptide' encoded by the tmRNA and targeted for degradation. The ribosome is freed to recommence translation, which seems to be the essential function of trans-translation. The sequence is that of SsrA-binding protein from Nostoc sp. (strain PCC 7120 / SAG 25.82 / UTEX 2576).